The sequence spans 589 residues: DNA mismatch repair protein MutL (589 aa).

Disordered regions lie at residues 330–355 (LQRREAPQRPEPARPYTTPPPSSHRE) and 374–394 (RIYEQPEPYRPPEPPAASEPT). Residues 331–341 (QRREAPQRPEP) are compositionally biased toward basic and acidic residues. Over residues 381–390 (PYRPPEPPAA) the composition is skewed to pro residues.

The protein belongs to the DNA mismatch repair MutL/HexB family.

In terms of biological role, this protein is involved in the repair of mismatches in DNA. It is required for dam-dependent methyl-directed DNA mismatch repair. May act as a 'molecular matchmaker', a protein that promotes the formation of a stable complex between two or more DNA-binding proteins in an ATP-dependent manner without itself being part of a final effector complex. The polypeptide is DNA mismatch repair protein MutL (Trichlorobacter lovleyi (strain ATCC BAA-1151 / DSM 17278 / SZ) (Geobacter lovleyi)).